The sequence spans 197 residues: Nucleoid occlusion factor SlmA (197 aa).

One can recognise an HTH tetR-type domain in the interval 7-67; it reads INRREHILQC…GLIEFIEESL (61 aa). The H-T-H motif DNA-binding region spans 30–49; it reads TTAKLAAEVGVSEAALYRHF. Residues 109 to 136 are a coiled coil; sequence DALLGENERLRSRISQLFSKIETHLKQI.

Belongs to the nucleoid occlusion factor SlmA family. In terms of assembly, homodimer. Interacts with FtsZ.

The protein resides in the cytoplasm. Its subcellular location is the nucleoid. Its function is as follows. Required for nucleoid occlusion (NO) phenomenon, which prevents Z-ring formation and cell division over the nucleoid. Acts as a DNA-associated cell division inhibitor that binds simultaneously chromosomal DNA and FtsZ, and disrupts the assembly of FtsZ polymers. SlmA-DNA-binding sequences (SBS) are dispersed on non-Ter regions of the chromosome, preventing FtsZ polymerization at these regions. The polypeptide is Nucleoid occlusion factor SlmA (Shewanella pealeana (strain ATCC 700345 / ANG-SQ1)).